The chain runs to 443 residues: Protein SCAR (443 aa).

Residues 1–96 are interaction with brk1 and abiA; sequence MVLITRYLPS…DYHRNTSIDT (96 aa). Residues 166–201 are a coiled coil; sequence VAEQQKLHEEARQRKRERREARLKKKGEKNEVEVKK. 2 disordered regions span residues 176 to 197 and 220 to 386; these read ARQR…KNEV and INIE…RSDL. Over residues 178–192 the composition is skewed to basic residues; sequence QRKRERREARLKKKG. The segment covering 221 to 252 has biased composition (polar residues); that stretch reads NIESPHTSSPQIQHQSNNTATPQHTTQHFGTN. Low complexity-rich tracts occupy residues 263 to 277 and 285 to 305; these read SQSS…INSY and NTST…TGFN. Residues 306-323 show a composition bias toward pro residues; that stretch reads TPPPPMSNNNNMPPPPPM. Residues 324–338 show a composition bias toward polar residues; sequence QQNGGAANNRLSVHN. The span at 346–365 shows a compositional bias: pro residues; the sequence is PAPPPPPPPPSAPAPPPPPM. A WH2 domain is found at 382-399; that stretch reads ARSDLLSSIMQGMALKPA.

This sequence belongs to the SCAR/WAVE family. As to quaternary structure, part of a Scar/WAVE complex containing brk1, scrA, abiA, pirA and napA. Interacts with brk1 and abiA.

The protein resides in the cytoplasm. It is found in the cytoskeleton. It localises to the cell projection. Its subcellular location is the pseudopodium tip. The protein localises to the filopodium tip. Its function is as follows. Involved in regulation of actin and microtubule organization. Regulates phagocytosis and macropinocytosis. This is Protein SCAR (scrA) from Dictyostelium discoideum (Social amoeba).